Consider the following 447-residue polypeptide: Signal recognition particle 54 kDa protein (447 aa).

Residues 103–110, 185–189, and 245–248 contribute to the GTP site; these read GVQGSGKT, DTAGR, and TKMD.

The protein belongs to the GTP-binding SRP family. SRP54 subfamily. In terms of assembly, part of the signal recognition particle protein translocation system, which is composed of SRP and FtsY. Archaeal SRP consists of a 7S RNA molecule of 300 nucleotides and two protein subunits: SRP54 and SRP19.

It localises to the cytoplasm. It carries out the reaction GTP + H2O = GDP + phosphate + H(+). Involved in targeting and insertion of nascent membrane proteins into the cytoplasmic membrane. Binds to the hydrophobic signal sequence of the ribosome-nascent chain (RNC) as it emerges from the ribosomes. The SRP-RNC complex is then targeted to the cytoplasmic membrane where it interacts with the SRP receptor FtsY. The chain is Signal recognition particle 54 kDa protein from Saccharolobus islandicus (strain M.16.27) (Sulfolobus islandicus).